The primary structure comprises 802 residues: MNFGSLFDNTPGGGSTGARLLSGLSYGNHTAATNVLPGGAMAQAAAAASLFSPPLTKSVYASSGLSLALEQPERGTNRGEASMRNNNNVGGGGDTFDGSVNRRSREEEHESRSGSDNVEGISGEDQDAADKPPRKKRYHRHTPQQIQELESMFKECPHPDEKQRLELSKRLCLETRQVKFWFQNRRTQMKTQLERHENALLRQENDKLRAENMSIREAMRNPICTNCGGPAMLGDVSLEEHHLRIENARLKDELDRVCNLTGKFLGHHHNHHYNSSLELAVGTNNNGGHFAFPPDFGGGGGCLPPQQQQSTVINGIDQKSVLLELALTAMDELVKLAQSEEPLWVKSLDGERDELNQDEYMRTFSSTKPTGLATEASRTSGMVIINSLALVETLMDSNRWTEMFPCNVARATTTDVISGGMAGTINGALQLMNAELQVLSPLVPVRNVNFLRFCKQHAEGVWAVVDVSIDPVRENSGGAPVIRRLPSGCVVQDVSNGYSKVTWVEHAEYDENQIHQLYRPLLRSGLGFGSQRWLATLQRQCECLAILISSSVTSHDNTSITPGGRKSMLKLAQRMTFNFCSGISAPSVHNWSKLTVGNVDPDVRVMTRKSVDDPGEPPGIVLSAATSVWLPAAPQRLYDFLRNERMRCEWDILSNGGPMQEMAHITKGQDQGVSLLRSNAMNANQSSMLILQETCIDASGALVVYAPVDIPAMHVVMNGGDSSYVALLPSGFAVLPDGGIDGGGSGDGDQRPVGGGSLLTVAFQILVNNLPTAKLTVESVETVNNLISCTVQKIRAALQCES.

Positions 71 to 143 are disordered; it reads QPERGTNRGE…RKKRYHRHTP (73 aa). Basic and acidic residues predominate over residues 103–113; that stretch reads RSREEEHESRS. The segment covering 133–142 has biased composition (basic residues); the sequence is PRKKRYHRHT. The segment at residues 134-193 is a DNA-binding region (homeobox); sequence RKKRYHRHTPQQIQELESMFKECPHPDEKQRLELSKRLCLETRQVKFWFQNRRTQMKTQL. Positions 182–221 form a coiled coil; that stretch reads FQNRRTQMKTQLERHENALLRQENDKLRAENMSIREAMRN. In terms of domain architecture, START spans 315–546; sequence GIDQKSVLLE…LQRQCECLAI (232 aa).

Belongs to the HD-ZIP homeobox family. Class IV subfamily. In terms of assembly, interacts with AIL7/PLT7, ANT, BBM and AIL1. Expressed in roots, stems, leaves and floral buds.

It localises to the nucleus. Probable transcription factor involved in the regulation of the tissue-specific accumulation of anthocyanins and in cellular organization of the primary root. This Arabidopsis thaliana (Mouse-ear cress) protein is Homeobox-leucine zipper protein ANTHOCYANINLESS 2.